Here is a 510-residue protein sequence, read N- to C-terminus: Fumarate hydratase, mitochondrial (510 aa).

A mitochondrion-targeting transit peptide spans 1–44 (MYRALWLLARSRRLVRPPASALASAPGLSGAAVPSFWPPNAARM). Lys61, Lys66, and Lys80 each carry N6-acetyllysine; alternate. N6-succinyllysine; alternate occurs at positions 61, 66, and 80. Residues Thr85 and Thr90 each carry the phosphothreonine modification. N6-acetyllysine is present on Lys94. N6-acetyllysine; alternate is present on residues Lys115 and Lys122. 2 positions are modified to N6-succinyllysine; alternate: Lys115 and Lys122. Residues 145 to 147 (SGT), 176 to 179 (HPND), and 186 to 188 (SSN) each bind substrate. Position 213 is an N6-acetyllysine (Lys213). Lys223 carries the N6-acetyllysine; alternate modification. Lys223 bears the N6-succinyllysine; alternate mark. Thr234 contributes to the substrate binding site. The active-site Proton donor/acceptor is His235. Thr236 bears the Phosphothreonine mark. An N6-acetyllysine modification is found at Lys256. At Lys292 the chain carries N6-acetyllysine; alternate. N6-succinyllysine; alternate is present on Lys292. Ser365 is a catalytic residue. Substrate contacts are provided by residues Ser366 and 371–373 (KVN). The residue at position 366 (Ser366) is a Phosphoserine. Lys467 and Lys473 each carry N6-succinyllysine. Lys502 is subject to N6-acetyllysine.

It belongs to the class-II fumarase/aspartase family. Fumarase subfamily. In terms of assembly, homotetramer. Interacts with H2AZ1. Phosphorylation at Thr-236 by PRKDC in response to DNA damage promotes translocation to the nucleus and recruitment to DNA double-strand breaks (DSBs).

The protein resides in the mitochondrion. It is found in the cytoplasm. The protein localises to the cytosol. Its subcellular location is the nucleus. It localises to the chromosome. The enzyme catalyses (S)-malate = fumarate + H2O. It participates in carbohydrate metabolism; tricarboxylic acid cycle; (S)-malate from fumarate: step 1/1. Catalyzes the reversible stereospecific interconversion of fumarate to L-malate. Experiments in other species have demonstrated that specific isoforms of this protein act in defined pathways and favor one direction over the other. Functionally, catalyzes the hydration of fumarate to L-malate in the tricarboxylic acid (TCA) cycle to facilitate a transition step in the production of energy in the form of NADH. In terms of biological role, catalyzes the dehydration of L-malate to fumarate. Fumarate metabolism in the cytosol plays a role during urea cycle and arginine metabolism; fumarate being a by-product of the urea cycle and amino-acid catabolism. Also plays a role in DNA repair by promoting non-homologous end-joining (NHEJ). In response to DNA damage and phosphorylation by PRKDC, translocates to the nucleus and accumulates at DNA double-strand breaks (DSBs): acts by catalyzing formation of fumarate, an inhibitor of KDM2B histone demethylase activity, resulting in enhanced dimethylation of histone H3 'Lys-36' (H3K36me2). The chain is Fumarate hydratase, mitochondrial from Macaca fascicularis (Crab-eating macaque).